The primary structure comprises 391 residues: NAD(P)H-quinone oxidoreductase subunit H, chloroplastic (391 aa).

The protein belongs to the complex I 49 kDa subunit family. As to quaternary structure, NDH is composed of at least 16 different subunits, 5 of which are encoded in the nucleus.

Its subcellular location is the plastid. It localises to the chloroplast thylakoid membrane. It catalyses the reaction a plastoquinone + NADH + (n+1) H(+)(in) = a plastoquinol + NAD(+) + n H(+)(out). The enzyme catalyses a plastoquinone + NADPH + (n+1) H(+)(in) = a plastoquinol + NADP(+) + n H(+)(out). In terms of biological role, NDH shuttles electrons from NAD(P)H:plastoquinone, via FMN and iron-sulfur (Fe-S) centers, to quinones in the photosynthetic chain and possibly in a chloroplast respiratory chain. The immediate electron acceptor for the enzyme in this species is believed to be plastoquinone. Couples the redox reaction to proton translocation, and thus conserves the redox energy in a proton gradient. This is NAD(P)H-quinone oxidoreductase subunit H, chloroplastic from Physcomitrium patens (Spreading-leaved earth moss).